The primary structure comprises 40 residues: Photosystem II reaction center protein J (40 aa).

A helical transmembrane segment spans residues 8–28; it reads IPLWLVGTVTGTLVIGLMGIF.

The protein belongs to the PsbJ family. As to quaternary structure, PSII is composed of 1 copy each of membrane proteins PsbA, PsbB, PsbC, PsbD, PsbE, PsbF, PsbH, PsbI, PsbJ, PsbK, PsbL, PsbM, PsbT, PsbX, PsbY, PsbZ, Psb30/Ycf12, at least 3 peripheral proteins of the oxygen-evolving complex and a large number of cofactors. It forms dimeric complexes.

It localises to the plastid. Its subcellular location is the chloroplast thylakoid membrane. In terms of biological role, one of the components of the core complex of photosystem II (PSII). PSII is a light-driven water:plastoquinone oxidoreductase that uses light energy to abstract electrons from H(2)O, generating O(2) and a proton gradient subsequently used for ATP formation. It consists of a core antenna complex that captures photons, and an electron transfer chain that converts photonic excitation into a charge separation. The chain is Photosystem II reaction center protein J from Psilotum nudum (Whisk fern).